The chain runs to 352 residues: tRNA pseudouridine synthase D (352 aa).

The Nucleophile role is filled by D81. In terms of domain architecture, TRUD spans 157–303; that stretch reads GVPNYFGLQR…MLHERRILRL (147 aa).

Belongs to the pseudouridine synthase TruD family.

It carries out the reaction uridine(13) in tRNA = pseudouridine(13) in tRNA. In terms of biological role, responsible for synthesis of pseudouridine from uracil-13 in transfer RNAs. The protein is tRNA pseudouridine synthase D of Azotobacter vinelandii (strain DJ / ATCC BAA-1303).